The sequence spans 116 residues: Anti-sigma F factor antagonist (116 aa).

Residues 3–113 enclose the STAS domain; it reads LAIDLEVKKD…ESEQYALHRL (111 aa). A Phosphoserine modification is found at Ser-58.

The protein belongs to the anti-sigma-factor antagonist family. Post-translationally, phosphorylated by SpoIIAB on a serine residue.

Functionally, in the phosphorylated form it could act as an anti-anti-sigma factor that counteracts SpoIIAB and thus releases sigma f from inhibition. In Heyndrickxia coagulans (Weizmannia coagulans), this protein is Anti-sigma F factor antagonist (spoIIAA).